The sequence spans 143 residues: D-aminoacyl-tRNA deacylase (143 aa).

A Gly-cisPro motif, important for rejection of L-amino acids motif is present at residues 135–136 (GP).

Belongs to the DTD family. In terms of assembly, homodimer.

It is found in the cytoplasm. It catalyses the reaction glycyl-tRNA(Ala) + H2O = tRNA(Ala) + glycine + H(+). It carries out the reaction a D-aminoacyl-tRNA + H2O = a tRNA + a D-alpha-amino acid + H(+). In terms of biological role, an aminoacyl-tRNA editing enzyme that deacylates mischarged D-aminoacyl-tRNAs. Also deacylates mischarged glycyl-tRNA(Ala), protecting cells against glycine mischarging by AlaRS. Acts via tRNA-based rather than protein-based catalysis; rejects L-amino acids rather than detecting D-amino acids in the active site. By recycling D-aminoacyl-tRNA to D-amino acids and free tRNA molecules, this enzyme counteracts the toxicity associated with the formation of D-aminoacyl-tRNA entities in vivo and helps enforce protein L-homochirality. The protein is D-aminoacyl-tRNA deacylase of Mycolicibacterium paratuberculosis (strain ATCC BAA-968 / K-10) (Mycobacterium paratuberculosis).